Reading from the N-terminus, the 171-residue chain is NADH-quinone oxidoreductase subunit I 2 (171 aa).

2 4Fe-4S ferredoxin-type domains span residues 39–71 (IVLTRDPDGQERCVACNLCAVACPVGCIDLSKA) and 81–110 (EHFRINFARCIFCGYCEEACPTAAIQLTPD). 8 residues coordinate [4Fe-4S] cluster: Cys-51, Cys-54, Cys-57, Cys-61, Cys-90, Cys-93, Cys-96, and Cys-100.

The protein belongs to the complex I 23 kDa subunit family. In terms of assembly, NDH-1 is composed of 14 different subunits. Subunits NuoA, H, J, K, L, M, N constitute the membrane sector of the complex. [4Fe-4S] cluster serves as cofactor.

It localises to the cell inner membrane. It catalyses the reaction a quinone + NADH + 5 H(+)(in) = a quinol + NAD(+) + 4 H(+)(out). In terms of biological role, NDH-1 shuttles electrons from NADH, via FMN and iron-sulfur (Fe-S) centers, to quinones in the respiratory chain. The immediate electron acceptor for the enzyme in this species is believed to be ubiquinone. Couples the redox reaction to proton translocation (for every two electrons transferred, four hydrogen ions are translocated across the cytoplasmic membrane), and thus conserves the redox energy in a proton gradient. This is NADH-quinone oxidoreductase subunit I 2 from Rhodopseudomonas palustris (strain BisB18).